The primary structure comprises 951 residues: Serine/threonine-protein phosphatase 4 regulatory subunit 1 (951 aa).

HEAT repeat units follow at residues 26-63 (ESDVIIIPSALDFVSQDEMLTPLGRLDKYAASENVFNR), 65-81 (MVARSLLDTLREVCDDE), 82-119 (RDCIAVLERISRLADDSEPTVRAELMEQVPHIALFCQE), 127-164 (AFSKYLLPIVVRYLADQNNQVRKTSQAALLALLEQELI), 168-206 (DVETKVCPVLIDLTAPDSNDDVKTEAVAIMCKMAPMVGK), 208-246 (ITERLILPRFCEMCCDCRMFHVRKVCAANFGDICSVVGQ), 248-285 (ATEEMLLPRFFQLCSDNVWGVRKACAECFMAVSCATCQ), and 287-324 (IRRTKLSALFINLISDPSRWVRQAAFQSLGPFISTFAN). Disordered stretches follow at residues 325-377 (PSSS…HSSA), 411-451 (SESP…PLDQ), and 474-499 (QQDPEERLSPERTGDVPAAPLPGPPN). Residues 332–365 (FKDESKSSEDSSAEDKDRMRDNDVVEEEHRRPED) are compositionally biased toward basic and acidic residues. Polar residues-rich tracts occupy residues 411–421 (SESPQEAASND) and 430–445 (NSKSASRPDAGTSSPE). Over residues 474-487 (QQDPEERLSPERTG) the composition is skewed to basic and acidic residues. Residues 506-543 (KELEEMIENLEPHMDDPDVKAQVDVLSAALRASSLDAH) form an HEAT 9 repeat. Residues 590–612 (DYVHGGADVSPGDGFSPDEDRRP) form a disordered region. 3 HEAT repeats span residues 699–735 (LTAADLVPIFNGFLKDLDEVRIGVLKHLHDFLKLLHI), 800–838 (WISYKLVSEMVKKLHTATPPTFGVDLINELVENFGRCPK), and 862–899 (QFAVHLMPHLLTLANDRVPNVRVLLAKTLRQTLLEKEY). At S936 the chain carries Phosphoserine.

As to quaternary structure, serine/threonine-protein phosphatase 4 (PP4) occurs in different assemblies of the catalytic and one or more regulatory subunits. Component of the PP4 complex PPP4C-PPP4R1. Interacts with HDAC3.

Functionally, regulatory subunit of serine/threonine-protein phosphatase 4. May play a role in regulation of cell division in renal glomeruli. The PPP4C-PPP4R1 PP4 complex may play a role in dephosphorylation and regulation of HDAC3. Plays a role in the inhibition of TNF-induced NF-kappa-B activation by regulating the dephosphorylation of TRAF2. In Mus musculus (Mouse), this protein is Serine/threonine-protein phosphatase 4 regulatory subunit 1 (Ppp4r1).